The following is a 742-amino-acid chain: Serine/threonine-protein kinase SKY1 (742 aa).

A disordered region spans residues 13–146 (KSAHLADTST…KDYRPGGYHP (134 aa)). The span at 19–35 (DTSTDASISCEEATSSQ) shows a compositional bias: polar residues. Over residues 56–73 (TKSKLSLALQTSKSSSSA) the composition is skewed to low complexity. The segment covering 81 to 101 (TSSKTEDFSTKSIKKKPDSGV) has biased composition (basic and acidic residues). Low complexity predominate over residues 106–127 (SIQSDSGPQSDSDLDSDSSISS). Positions 128–140 (CDERNEESLKDYR) are enriched in basic and acidic residues. The 549-residue stretch at 158–706 (YILVRKLGWG…AGGLVNHPWL (549 aa)) folds into the Protein kinase domain. ATP contacts are provided by residues 164-172 (LGWGHFSTV) and Lys-187. The Proton acceptor role is filled by Asp-294. Thr-383 and Thr-386 each carry phosphothreonine. Ser-388, Ser-393, Ser-410, Ser-427, Ser-432, Ser-445, Ser-449, and Ser-453 each carry phosphoserine. Residues 459–491 (INEDSNDNNNNDNSKNKNNNNNNSNNNNNEDIM) form a disordered region. The segment covering 465–489 (DNNNNDNSKNKNNNNNNSNNNNNED) has biased composition (low complexity).

This sequence belongs to the protein kinase superfamily. Ser/Thr protein kinase family.

The enzyme catalyses L-seryl-[protein] + ATP = O-phospho-L-seryl-[protein] + ADP + H(+). It catalyses the reaction L-threonyl-[protein] + ATP = O-phospho-L-threonyl-[protein] + ADP + H(+). Constitutively active kinase, specifically and sequentially phosphorylates serine/arginine (SR)-type shuttling mRNA binding proteins in their RS dipeptide repeats. In Saccharomyces cerevisiae (strain ATCC 204508 / S288c) (Baker's yeast), this protein is Serine/threonine-protein kinase SKY1 (SKY1).